A 593-amino-acid chain; its full sequence is Dolichyl-phosphooligosaccharide-protein glycotransferase 2 (593 aa).

The Cytoplasmic segment spans residues Met1–Ser12. A helical transmembrane segment spans residues Leu13 to Phe33. Residues Asp34–Glu98 lie on the Extracellular side of the membrane. Residues Gly41–Asp43 carry the DXD motif 1 motif. Asp43 is a binding site for Mn(2+). Residues Ile99–Ile119 traverse the membrane as a helical segment. Over Ser120 to Lys128 the chain is Cytoplasmic. A helical transmembrane segment spans residues Phe129–Leu149. The Extracellular segment spans residues Gly150–His154. Asp153 lines the Mn(2+) pocket. The DXD motif 2 signature appears at Asp153–His155. His154 is an a glycophospholipid binding site. His155 is a Mn(2+) binding site. The helical transmembrane segment at His155–Leu175 threads the bilayer. Residues Lys176–Gly180 lie on the Cytoplasmic side of the membrane. The chain crosses the membrane as a helical span at residues Ile181–Ala201. Residues Val202–Gln229 lie on the Extracellular side of the membrane. Residues Asn230 to Val250 form a helical membrane-spanning segment. Over Lys251–Leu265 the chain is Cytoplasmic. The helical transmembrane segment at Cys266–Val286 threads the bilayer. Over Lys287–Gln310 the chain is Extracellular. The TIXE motif motif lies at Thr302–Glu305. Residues Ile311–Phe331 form a helical membrane-spanning segment. Met332 is a topological domain (cytoplasmic). The helical transmembrane segment at Leu333–Leu353 threads the bilayer. Arg354 is a topological domain (extracellular). Arg354 is an a glycophospholipid binding site. Residues Phe355–Leu375 form a helical membrane-spanning segment. Residues Glu376 to Ala411 are Cytoplasmic-facing. The helical transmembrane segment at Thr412–Val432 threads the bilayer. The Extracellular segment spans residues Glu433–Lys593. An interacts with target acceptor peptide in protein substrate region spans residues Trp468–Asp470. A WWDYG motif motif is present at residues Trp468 to Gly472. Residues Glu524–Ile539 carry the DKi motif motif.

The protein belongs to the STT3 family. The cofactor is Mn(2+). Mg(2+) is required as a cofactor. It depends on Zn(2+) as a cofactor.

Its subcellular location is the cell membrane. It carries out the reaction an archaeal dolichyl phosphooligosaccharide + [protein]-L-asparagine = an archaeal dolichyl phosphate + a glycoprotein with the oligosaccharide chain attached by N-beta-D-glycosyl linkage to a protein L-asparagine.. Its pathway is protein modification; protein glycosylation. In terms of biological role, oligosaccharyl transferase (OST) that catalyzes the initial transfer of a defined glycan (a GalNAc-linked heptasaccharide composed of 4 Hex, 3 dHex and a sulfate for A.fulgidus AglB-S) from the lipid carrier dolichol-monophosphate to an asparagine residue within an Asn-X-Ser/Thr consensus motif in nascent polypeptide chains, the first step in protein N-glycosylation. The protein is Dolichyl-phosphooligosaccharide-protein glycotransferase 2 (aglB2) of Archaeoglobus fulgidus (strain ATCC 49558 / DSM 4304 / JCM 9628 / NBRC 100126 / VC-16).